A 343-amino-acid polypeptide reads, in one-letter code: MTISVAVSGASGYAGGEVLRLLAGHPDVTIGAITAHSNAGSRLGELQPHLHGLASRILEDTTVENLSGHDVVFLALPHGASADIAAQLPEGTVVIDAGADHRLEDPAAWEKFYGSAHAGTWPYGLPELPGQREKLKGANRIAVPGCYPTSALLALTPGFAGSLLQPDDVVIVAASGTSGAGKAAKVNLIGSEVMGSMSPYGVGGGHRHTPEIEQGLGNAAGEAVTVSFTPTLAPMSRGILTTATAKVKPGVTAAELRSAWEEAYDDEPFVHLLPEGQWPSTKSVQGSNHAVMQVAFDAHTGRVIVTCAIDNLTKGTAGGAVQSMNIALGLAETAGLNLQGVAP.

The active site involves cysteine 146.

It belongs to the NAGSA dehydrogenase family. Type 1 subfamily.

The protein resides in the cytoplasm. It carries out the reaction N-acetyl-L-glutamate 5-semialdehyde + phosphate + NADP(+) = N-acetyl-L-glutamyl 5-phosphate + NADPH + H(+). It functions in the pathway amino-acid biosynthesis; L-arginine biosynthesis; N(2)-acetyl-L-ornithine from L-glutamate: step 3/4. Catalyzes the NADPH-dependent reduction of N-acetyl-5-glutamyl phosphate to yield N-acetyl-L-glutamate 5-semialdehyde. In Arthrobacter sp. (strain FB24), this protein is N-acetyl-gamma-glutamyl-phosphate reductase.